The following is a 423-amino-acid chain: Tyrosine--tRNA ligase (423 aa).

Tyr35 lines the L-tyrosine pocket. The 'HIGH' region motif lies at 40-49 (PTAPSLHAGH). Positions 170 and 174 each coordinate L-tyrosine. A 'KMSKS' region motif is present at residues 230–234 (KFGKS). Lys233 is a binding site for ATP. In terms of domain architecture, S4 RNA-binding spans 355–412 (DLITDLLVATGLSASKGAARRTIAEGGVSVNNMKIDSDEWTPQASDFLHGRWLVLRRG).

This sequence belongs to the class-I aminoacyl-tRNA synthetase family. TyrS type 1 subfamily. Homodimer.

It is found in the cytoplasm. It catalyses the reaction tRNA(Tyr) + L-tyrosine + ATP = L-tyrosyl-tRNA(Tyr) + AMP + diphosphate + H(+). Functionally, catalyzes the attachment of tyrosine to tRNA(Tyr) in a two-step reaction: tyrosine is first activated by ATP to form Tyr-AMP and then transferred to the acceptor end of tRNA(Tyr). This Mycobacterium sp. (strain KMS) protein is Tyrosine--tRNA ligase.